We begin with the raw amino-acid sequence, 455 residues long: MNFDIEKLDSQMASDEKKLFFIQTYGCQMNEEDSEKLSGMLKRMGYENTENRDEASIIIFNTCCVRENAENKVFGNLGALKKQKEKNPDLVIGICGCMMQQKGMADDILKRFPYVNIIFGTHNSYKFPEYLNRVKTEGVQIKEIIDKETEIVEGIPIDRKSDIKGFVTIMYGCNNFCTYCIVPYVRGRERSRKPEDIVNEIKDMVTRGYKEVTLLGQNVNSYGKGLEENITFADLLRKVNEIEGLERIRFMTSHPKDLTLDVVYAIRDCDKVCEQIHLPVQSGSDRILKEMNRHYTKEQYITLAKKIRAEIPDVTFSTDIIVGFPGETEEDFSETLELAKEVRYDAAFTFIYSRRNHTPADKMENQIPDEIKHERFNRLVEIVNTGIAKGNKDAEGKIYEVLVEGYSKNDEAKLTGRTRNGRLVNFEGGEDLIGKLVNVKIIKANSFSLIGEVEK.

Residues Lys-18–Thr-136 enclose the MTTase N-terminal domain. Residues Cys-27, Cys-63, Cys-97, Cys-173, Cys-177, and Cys-180 each coordinate [4Fe-4S] cluster. In terms of domain architecture, Radical SAM core spans Arg-159–Lys-389. Positions Lys-392 to Lys-455 constitute a TRAM domain.

The protein belongs to the methylthiotransferase family. MiaB subfamily. As to quaternary structure, monomer. The cofactor is [4Fe-4S] cluster.

The protein localises to the cytoplasm. It catalyses the reaction N(6)-dimethylallyladenosine(37) in tRNA + (sulfur carrier)-SH + AH2 + 2 S-adenosyl-L-methionine = 2-methylsulfanyl-N(6)-dimethylallyladenosine(37) in tRNA + (sulfur carrier)-H + 5'-deoxyadenosine + L-methionine + A + S-adenosyl-L-homocysteine + 2 H(+). Functionally, catalyzes the methylthiolation of N6-(dimethylallyl)adenosine (i(6)A), leading to the formation of 2-methylthio-N6-(dimethylallyl)adenosine (ms(2)i(6)A) at position 37 in tRNAs that read codons beginning with uridine. The chain is tRNA-2-methylthio-N(6)-dimethylallyladenosine synthase from Clostridium beijerinckii (strain ATCC 51743 / NCIMB 8052) (Clostridium acetobutylicum).